Here is a 68-residue protein sequence, read N- to C-terminus: uncharacterized protein (68 aa).

The first 15 residues, 1–15 (MTIIFLICLDASTQS), serve as a signal peptide directing secretion. The segment at 14 to 68 (QSTTNNSINNNNNNNNNNNNNNNNNNNNNNNNNNNNNNNNNNNNNNSKVFDFNIF) is disordered. N-linked (GlcNAc...) asparagine glycosylation is found at asparagine 18 and asparagine 58. Positions 22-59 (NNNNNNNNNNNNNNNNNNNNNNNNNNNNNNNNNNNNNN) are enriched in low complexity.

The protein localises to the secreted. This is an uncharacterized protein from Dictyostelium discoideum (Social amoeba).